Consider the following 688-residue polypeptide: MASVASARWLRVSCGLCVPLTARRAGPCGRTPSSRFYSGSAAVPKDEGADIAGTEEVVIPKKKTWDKVAVLQALASTVHRDTTAAPYAFQDDPYLIPTSSVESHSFLLAKKSGENAAKFIINSYPKYFQKDIAEPHIPCLMPEYFEPQIEEISEAALQERIKLKKVKASVDIFDQLLQAGTTVSLETTNSLLDLLCYYGNQEPSTNYNFQQHEQTEELEEAEEGDNMKSKKKAGHQLGVTWRARNHAERIFALMPEKNAHSYCTMIRGMVKHRAHTQALSMYTELLNNRLRADVHTFNSLIEATALVVNAKFEEKWNNILDLLKQMVAQNVKPNLQTFNTILKCLRRFYAFGKLPALQTFREMKAIGIEPSLATYHHIIQLFYQHESPSKGSSLIIYDIMDEITGKTFSPKDPDDDMFFQSAMRVCSSLRDLELAYQVHGLLNTGDNRKFIGPDPRRNFYYSKFFSLLCLMEQIDVTLKWYKDLIPSVFFPHSQTLIDLLQALDVANRLEMIPQIWKDSKEYGHTFRSDLKEEILMLMARDQHPPELQAAFADCAADIKSTYESQDARQTASEWPANSLNYIAILFLRAGRTQEAWKMLGLFRKHNKIPRNELLNEFMDSAKASSSPAQAVEVVKLANSFSLPICEGLTQRLTADFTLSQEQKEALGDLTALTSDSESDSDSDTSKDK.

A mitochondrion-targeting transit peptide spans 1–37 (MASVASARWLRVSCGLCVPLTARRAGPCGRTPSSRFY). Lys-126 carries the post-translational modification N6-acetyllysine. PPR repeat units lie at residues 149–183 (IEEI…GTTV), 184–219 (SLET…EELE), 258–292 (NAHS…RLRA), 293–333 (DVHT…NVKP), 334–370 (NLQT…GIEP), 371–412 (SLAT…SPKD), 415–449 (DDMF…DNRK), 457–491 (RNFY…VFFP), 492–526 (HSQT…GHTF), and 575–609 (PANS…NKIP). The segment at 667-688 (GDLTALTSDSESDSDSDTSKDK) is disordered.

This sequence belongs to the mitochondrion-specific ribosomal protein mS39 family. In terms of assembly, component of the mitochondrial ribosome small subunit (28S) which comprises a 12S rRNA and about 30 distinct proteins. Associated with the 12S mitochondrial rRNA (12S mt-rRNA).

The protein resides in the mitochondrion. Functionally, mitochondrial RNA-binding protein that has a role in mitochondrial translation. In Bos taurus (Bovine), this protein is Small ribosomal subunit protein mS39 (PTCD3).